The sequence spans 330 residues: DNA-directed RNA polymerase subunit alpha (330 aa).

Positions Met-1–Arg-236 are alpha N-terminal domain (alpha-NTD). Residues Phe-250–Asp-330 are alpha C-terminal domain (alpha-CTD).

This sequence belongs to the RNA polymerase alpha chain family. As to quaternary structure, homodimer. The RNAP catalytic core consists of 2 alpha, 1 beta, 1 beta' and 1 omega subunit. When a sigma factor is associated with the core the holoenzyme is formed, which can initiate transcription.

It carries out the reaction RNA(n) + a ribonucleoside 5'-triphosphate = RNA(n+1) + diphosphate. Functionally, DNA-dependent RNA polymerase catalyzes the transcription of DNA into RNA using the four ribonucleoside triphosphates as substrates. The protein is DNA-directed RNA polymerase subunit alpha of Vibrio atlanticus (strain LGP32) (Vibrio splendidus (strain Mel32)).